Reading from the N-terminus, the 721-residue chain is Glycine--tRNA ligase beta subunit (721 aa).

It belongs to the class-II aminoacyl-tRNA synthetase family. As to quaternary structure, tetramer of two alpha and two beta subunits.

It is found in the cytoplasm. The catalysed reaction is tRNA(Gly) + glycine + ATP = glycyl-tRNA(Gly) + AMP + diphosphate. The chain is Glycine--tRNA ligase beta subunit from Sinorhizobium fredii (strain NBRC 101917 / NGR234).